The primary structure comprises 361 residues: Queuine tRNA-ribosyltransferase (361 aa).

The active-site Proton acceptor is Asp89. Substrate is bound by residues 89 to 93 (DSGGF), Asp143, Gln185, and Gly212. The segment at 243–249 (GVGTPED) is RNA binding. Residue Asp262 is the Nucleophile of the active site. The interval 267–271 (TRNAR) is RNA binding; important for wobble base 34 recognition. Zn(2+)-binding residues include Cys300, Cys302, Cys305, and His331.

It belongs to the queuine tRNA-ribosyltransferase family. In terms of assembly, homodimer. Within each dimer, one monomer is responsible for RNA recognition and catalysis, while the other monomer binds to the replacement base PreQ1. It depends on Zn(2+) as a cofactor.

The enzyme catalyses 7-aminomethyl-7-carbaguanine + guanosine(34) in tRNA = 7-aminomethyl-7-carbaguanosine(34) in tRNA + guanine. The protein operates within tRNA modification; tRNA-queuosine biosynthesis. In terms of biological role, catalyzes the base-exchange of a guanine (G) residue with the queuine precursor 7-aminomethyl-7-deazaguanine (PreQ1) at position 34 (anticodon wobble position) in tRNAs with GU(N) anticodons (tRNA-Asp, -Asn, -His and -Tyr). Catalysis occurs through a double-displacement mechanism. The nucleophile active site attacks the C1' of nucleotide 34 to detach the guanine base from the RNA, forming a covalent enzyme-RNA intermediate. The proton acceptor active site deprotonates the incoming PreQ1, allowing a nucleophilic attack on the C1' of the ribose to form the product. After dissociation, two additional enzymatic reactions on the tRNA convert PreQ1 to queuine (Q), resulting in the hypermodified nucleoside queuosine (7-(((4,5-cis-dihydroxy-2-cyclopenten-1-yl)amino)methyl)-7-deazaguanosine). The protein is Queuine tRNA-ribosyltransferase of Nitrosomonas eutropha (strain DSM 101675 / C91 / Nm57).